A 355-amino-acid chain; its full sequence is Protein DVR-1 (355 aa).

The N-terminal stretch at 1 to 15 (MFLVLLRACLLTLSL) is a signal peptide. Residues 16–240 (CSPAEDDGLV…PLQCRSRRKR (225 aa)) constitute a propeptide that is removed on maturation. Residues N108, N179, and N296 are each glycosylated (N-linked (GlcNAc...) asparagine). 3 disulfide bridges follow: C254–C320, C283–C352, and C287–C354.

It belongs to the TGF-beta family. In terms of assembly, homodimer. As to expression, abundant in ovaries and eggs, and equally distributed among all blastomeres.

The protein resides in the secreted. In terms of biological role, serves to facilitate the differentiation of either mesoderm or endoderm either as a cofactor in an instructive signal or by providing permissive environment. In Danio rerio (Zebrafish), this protein is Protein DVR-1 (dvr1).